The primary structure comprises 189 residues: Cyclin-dependent kinase inhibitor 5 (189 aa).

A compositionally biased stretch (polar residues) spans 73-93 (KQQKQQLIPSVNQCQTKNPRA). A disordered region spans residues 73–107 (KQQKQQLIPSVNQCQTKNPRASSGPAKKLEPDTTT).

This sequence belongs to the CDI family. ICK/KRP subfamily. Interacts with CYCD4-1. Does not interact with CDKA-1. Expressed in flowers and at lower levels in roots and leaves.

Its subcellular location is the nucleus. It localises to the nucleoplasm. Functionally, inhibits CYCD2-1/CDKA-1 complex kinase activity without interaction with the complex. The polypeptide is Cyclin-dependent kinase inhibitor 5 (KRP5) (Arabidopsis thaliana (Mouse-ear cress)).